A 345-amino-acid chain; its full sequence is Protein GAMETE CELL DEFECTIVE 1, mitochondrial (345 aa).

Residues 1-43 constitute a mitochondrion transit peptide; sequence MLALRKTLLHGRLPAAPPAAAAAAIASRIPALLRRLSSSPGDG. The segment at 36-82 is disordered; it reads LSSSPGDGQGGDEWGSSWSTGITKEHFDGSDAAVGRPVTSPSKPVSP.

Its subcellular location is the mitochondrion. Functionally, essential for fertility (male and female gametophyte functions and development). Required for the integrity of female gametic mitochondria. Involved in embryo apical-basal patterning, and particularly dorsal-ventral patterning, during early embryogenesis, and endosperm free nucleus positioning and development as well as early endosperm development, probably by modulating the expression pattern of related genes (e.g. AL1, MYB3/AL2, CYP78A13/GE, PNH1, HAZ1, MPK6 and OSH1). Has function in triggering of endosperm programmed cell death (PCD) leading to syncytial endosperm cellularization and starchy endosperm cell maturation. Implicated in central vacuole dynamics necessary for microspore development leading to pollen production, and for pollen development and germination. The polypeptide is Protein GAMETE CELL DEFECTIVE 1, mitochondrial (Oryza sativa subsp. indica (Rice)).